A 520-amino-acid polypeptide reads, in one-letter code: Transcription factor MYB33 (520 aa).

The segment at 1–24 (MSYTSTDSDHNESPAADDNGSDCR) is disordered. HTH myb-type domains follow at residues 29–81 (GHAL…ANHL) and 82–136 (RPNL…KRRQ). 2 DNA-binding regions (H-T-H motif) span residues 57 to 81 (WNAV…ANHL) and 109 to 132 (WARM…NTRI). Low complexity predominate over residues 331–342 (SSSPPHSDLLDP). Disordered regions lie at residues 331 to 359 (SSSP…GEES) and 426 to 447 (EMST…RKPL).

As to expression, mostly expressed in stems, shoot apices, flowers and floral shoot tips, and, to a lower extent, in roots (e.g. root tips), seedlings, leaves and siliques.

It is found in the nucleus. In terms of biological role, transcriptional activator of alpha-amylase expression that binds to 5'-CAACTGTC-3' motif in target gene promoter. Positive regulator of abscisic acid (ABA) responses leading to growth arrest during seed germination. In vegetative tissues, inhibits growth by reducing cell proliferation. Promotes the expression of aleurone-related genes (e.g. CP1, CP, GASA1, BXL1 and BXL2) in seeds. Together with MYB65 and MYB101, promotes the programmed cell death (PCD) the vacuolation of protein storage vacuoles (PSVs) in the aleurone layers during seed germination. Binds to a GARE site (GA-response element) in the LEAFY promoter, essential for its gibberellic acid (GA)-mediated induction. Together with MYB65, facilitates anther and tapetum development. This is Transcription factor MYB33 from Arabidopsis thaliana (Mouse-ear cress).